Reading from the N-terminus, the 419-residue chain is G protein-activated inward rectifier potassium channel 4 (419 aa).

Topologically, residues 1-86 (MAGDSRNAMN…LFTTLVDLKW (86 aa)) are cytoplasmic. Ser-5 carries the post-translational modification Phosphoserine. Residues 87–111 (RFNLLVFTMVYTITWLFFGFIWWLI) form a helical membrane-spanning segment. Residues 112 to 135 (AYVRGDLDHVGDQEWIPCVENLSG) are Extracellular-facing. The helical; Pore-forming intramembrane region spans 136–147 (FVSAFLFSIETE). Positions 148 to 154 (TTIGYGF) form an intramembrane region, pore-forming. Positions 149 to 154 (TIGYGF) match the Selectivity filter motif. Over 155-163 (RVITEKCPE) the chain is Extracellular. The chain crosses the membrane as a helical span at residues 164–185 (GIILLLVQAILGSIVNAFMVGC). Over 186–419 (MFVKISQPKK…SVSRATRGSM (234 aa)) the chain is Cytoplasmic. The segment covering 380 to 390 (LPSPPLLGGCA) has biased composition (low complexity). The interval 380 to 419 (LPSPPLLGGCAEAEKEAEAEHDEEEEPNGLSVSRATRGSM) is disordered. The span at 409 to 419 (LSVSRATRGSM) shows a compositional bias: polar residues.

This sequence belongs to the inward rectifier-type potassium channel (TC 1.A.2.1) family. KCNJ5 subfamily. Associates with KCNJ3/GIRK1 or KCNJ6/GRIK2 to form a G-protein-activated heteromultimer pore-forming unit. The resulting inward current is much larger. Most abundant in heart tissue where it is found predominantly in atria. Also found in brain, kidney, liver, spleen, lung and thymus.

The protein resides in the membrane. It catalyses the reaction K(+)(in) = K(+)(out). With respect to regulation, heteromultimer composed of KCNJ3/GIRK1 and KCNJ5/GIRK4 is activated by phosphatidylinositol 4,5 biphosphate (PtdIns(4,5)P2). Functionally, inward rectifier potassium channels are characterized by a greater tendency to allow potassium to flow into the cell rather than out of it. Their voltage dependence is regulated by the concentration of extracellular potassium; as external potassium is raised, the voltage range of the channel opening shifts to more positive voltages. The inward rectification is mainly due to the blockage of outward current by internal magnesium. Can be blocked by external barium. This potassium channel is controlled by G proteins. The protein is G protein-activated inward rectifier potassium channel 4 (Kcnj5) of Rattus norvegicus (Rat).